Reading from the N-terminus, the 372-residue chain is Dual-specificity RNA methyltransferase RlmN (372 aa).

Glu94 acts as the Proton acceptor in catalysis. In terms of domain architecture, Radical SAM core spans 100–339 (DGDRATLCVS…VTIRKTRGDD (240 aa)). Cys107 and Cys344 are joined by a disulfide. [4Fe-4S] cluster contacts are provided by Cys114, Cys118, and Cys121. S-adenosyl-L-methionine is bound by residues 168–169 (GE), Ser200, 222–224 (SLH), and Asn301. The S-methylcysteine intermediate role is filled by Cys344.

It belongs to the radical SAM superfamily. RlmN family. [4Fe-4S] cluster serves as cofactor.

The protein localises to the cytoplasm. The catalysed reaction is adenosine(2503) in 23S rRNA + 2 reduced [2Fe-2S]-[ferredoxin] + 2 S-adenosyl-L-methionine = 2-methyladenosine(2503) in 23S rRNA + 5'-deoxyadenosine + L-methionine + 2 oxidized [2Fe-2S]-[ferredoxin] + S-adenosyl-L-homocysteine. The enzyme catalyses adenosine(37) in tRNA + 2 reduced [2Fe-2S]-[ferredoxin] + 2 S-adenosyl-L-methionine = 2-methyladenosine(37) in tRNA + 5'-deoxyadenosine + L-methionine + 2 oxidized [2Fe-2S]-[ferredoxin] + S-adenosyl-L-homocysteine. Its function is as follows. Specifically methylates position 2 of adenine 2503 in 23S rRNA and position 2 of adenine 37 in tRNAs. m2A2503 modification seems to play a crucial role in the proofreading step occurring at the peptidyl transferase center and thus would serve to optimize ribosomal fidelity. This Aliivibrio fischeri (strain ATCC 700601 / ES114) (Vibrio fischeri) protein is Dual-specificity RNA methyltransferase RlmN.